The sequence spans 242 residues: MSGHSKWHNIQGRKNAQDAKRGKIFQKISREIYMVAKSGGPDPDGNPQLRLIMDKARAANMPKDNIKRAIDKATGTGGADYEEITYEGYGPAGVAILVHALTDNRNRTASAVRADFNRNGGNLGETGSVSFMFDRKGYIAIAREDLEVDEDQMFEDVIEAGGEDLQTSDEVFEIYTDPKAFADVRDELQKKYDLATAELTMVPQNTVPVPADKVEQLQRLIDRLEDEDDVSEVYTSADFPED.

Residues 1 to 21 (MSGHSKWHNIQGRKNAQDAKR) form a disordered region.

The protein belongs to the TACO1 family.

It is found in the cytoplasm. The chain is Probable transcriptional regulatory protein LSL_0422 from Ligilactobacillus salivarius (strain UCC118) (Lactobacillus salivarius).